A 280-amino-acid polypeptide reads, in one-letter code: MGHSGENVLCVALLAIYLAAGGAAKPVMPERRGYAPPFTAAPSTLGTVDVTACGGITLPTKVDFRGSGGVQVIVRWFFGAPIDDNTTDLCWVPLHSYQADGCHFPADDDFNISTCCAHGTLFVSPDSDYSSYLTGNGDLRVYPGTMDAGIYAFYVRIGDDHFVGAWDLRVKHSKYCHGDYGMKVQVQSLPESSEERVVATDSDSGSCEDDEKEEKSDCEFPEIAVPQTWSKVCTATWGEHGSRLFVWPACLGTHQESIEGAHTAMPVLYYGSKPIASEQK.

The first 24 residues, 1 to 24 (MGHSGENVLCVALLAIYLAAGGAA), serve as a signal peptide directing secretion. N-linked (GlcNAc...) asparagine; by host glycosylation is found at N85 and N111. Positions 191 to 218 (ESSEERVVATDSDSGSCEDDEKEEKSDC) are disordered.

Belongs to the alphaherpesvirinae glycoprotein G family.

The polypeptide is Glycoprotein G (gG) (Psittacid herpesvirus 1 (isolate Amazon parrot/-/97-0001/1997) (PsHV-1)).